A 265-amino-acid chain; its full sequence is Apolipoprotein A-I (265 aa).

Residues 1 to 16 (MKAAVLIWLFLMGSQA) form the signal peptide. 2 consecutive repeat copies span residues 66–87 (LKLLDNWDSLTSTVNKLREQLG) and 88–109 (PVTQEFWDNLEKETEELRQEMS). The 10 X approximate tandem repeats stretch occupies residues 66–265 (LKLLDNWDSL…EEYTKKLSSQ (200 aa)). Position 108 is a methionine sulfoxide (methionine 108). The 3; half-length repeat unit spans residues 110-120 (KDLEEVKAQVQ). A run of 5 repeats spans residues 121-142 (PYLDNFQKNWQEEMNLYSQKLE), 143-164 (PLRTELQEGALQKLQDLQEKLS), 165-186 (PLAEQVRDRARAHVNTLRTQLA), 187-208 (PYSDELRQRLATRLEALKENSG), and 209-230 (ASLAEYHAKASEHLSALGEKAK). The residue at position 134 (methionine 134) is a Methionine sulfoxide. Residues 231-241 (PALDDLRQGLL) form a 9; half-length repeat. Repeat unit 10 spans residues 242-265 (PVLESFKVSFLSALEEYTKKLSSQ).

The protein belongs to the apolipoprotein A1/A4/E family. Homodimer. Interacts with APOA1BP and CLU. Component of a sperm activating protein complex (SPAP), consisting of APOA1, an immunoglobulin heavy chain, an immunoglobulin light chain and albumin. Interacts with NDRG1. Interacts with SCGB3A2. Interacts with NAXE and YJEFN3. Post-translationally, glycosylated. Palmitoylated. In terms of processing, phosphorylation sites are present in the extracellular medium.

It localises to the secreted. Functionally, participates in the reverse transport of cholesterol from tissues to the liver for excretion by promoting cholesterol efflux from tissues and by acting as a cofactor for the lecithin cholesterol acyltransferase (LCAT). As part of the SPAP complex, activates spermatozoa motility. This is Apolipoprotein A-I (APOA1) from Aotus nancymaae (Ma's night monkey).